Reading from the N-terminus, the 1015-residue chain is Formate dehydrogenase, nitrate-inducible, major subunit (1015 aa).

The tat-type signal signal peptide spans 1 to 33; sequence MDVSRRQFFKICAGGMAGTTVAALGFAPKQALA. Residues 43-106 enclose the 4Fe-4S Mo/W bis-MGD-type domain; sequence AKEIRNTCTY…GLLDYVNSEN (64 aa). Cysteine 50, cysteine 53, cysteine 57, and cysteine 92 together coordinate [4Fe-4S] cluster. Residue selenocysteine 196 participates in Mo-bis(molybdopterin guanine dinucleotide) binding. Residue selenocysteine 196 is a non-standard amino acid, selenocysteine.

The protein belongs to the prokaryotic molybdopterin-containing oxidoreductase family. Trimer of heterotrimers, consisting of subunits alpha, beta and gamma. Requires Mo-bis(molybdopterin guanine dinucleotide) as cofactor. The cofactor is [4Fe-4S] cluster. In terms of processing, exported by the Tat system. The position of the signal peptide cleavage has not been experimentally proven.

It is found in the periplasm. It catalyses the reaction a quinone + formate + H(+) = a quinol + CO2. Functionally, formate dehydrogenase allows E.coli to use formate as major electron donor during anaerobic respiration, when nitrate is used as electron acceptor. The alpha subunit FdnG contains the formate oxidation site. Electrons are transferred from formate to menaquinone in the gamma subunit (FdnI), through the 4Fe-4S clusters in the beta subunit (FdnH). Formate dehydrogenase-N is part of a system that generates proton motive force, together with the dissimilatory nitrate reductase (Nar). In Escherichia coli (strain K12), this protein is Formate dehydrogenase, nitrate-inducible, major subunit (fdnG).